Consider the following 470-residue polypeptide: Glycine--tRNA ligase (470 aa).

Substrate-binding residues include arginine 94 and glutamate 183. ATP is bound by residues 215-217 (RNE), 225-230 (FRMVEF), 298-299 (EI), and 342-345 (GCDR). Residue 230-234 (FEQME) participates in substrate binding. A substrate-binding site is contributed by 338 to 342 (ETSSG).

This sequence belongs to the class-II aminoacyl-tRNA synthetase family. In terms of assembly, homodimer.

The protein localises to the cytoplasm. The catalysed reaction is tRNA(Gly) + glycine + ATP = glycyl-tRNA(Gly) + AMP + diphosphate. In terms of biological role, catalyzes the attachment of glycine to tRNA(Gly). The sequence is that of Glycine--tRNA ligase from Chlorobaculum tepidum (strain ATCC 49652 / DSM 12025 / NBRC 103806 / TLS) (Chlorobium tepidum).